Here is a 275-residue protein sequence, read N- to C-terminus: Putative acyl-[acyl-carrier-protein] desaturase DesA2 (275 aa).

The Fe cation site is built by Glu-107, His-110, Glu-159, Glu-189, and His-192.

It belongs to the fatty acid desaturase type 2 family. Homodimer. The cofactor is Fe(2+).

It participates in lipid metabolism; fatty acid metabolism. May be a desaturase involved in mycobacterial fatty acid biosynthesis. In Mycobacterium tuberculosis (strain CDC 1551 / Oshkosh), this protein is Putative acyl-[acyl-carrier-protein] desaturase DesA2 (desA2).